Here is a 379-residue protein sequence, read N- to C-terminus: Odorant receptor 33b (379 aa).

Residues 1-37 (MDLKPRVIRSEDIYRTYWLYWHLLGLESNFFLNRLLD) are Cytoplasmic-facing. Residues 38–58 (LVITIFVTIWYPIHLILGLFM) traverse the membrane as a helical segment. Topologically, residues 59–64 (ERSLGD) are extracellular. A helical membrane pass occupies residues 65 to 85 (VCKGLPITAACFFASFKFICF). At 86–129 (RFKLSEIKEIEILFKELDQRALSREECEFFNQNTRREANFIWKS) the chain is on the cytoplasmic side. Residues 130-150 (FIVAYGLSNISAIASVLFGGG) traverse the membrane as a helical segment. Topologically, residues 151–165 (HKLLYPAWFPYDVQA) are extracellular. The helical transmembrane segment at 166–186 (TELIFWLSVTYQIAGVSLAIL) threads the bilayer. Over 187–256 (QNLANDSYPP…LLRSTMNISQ (70 aa)) the chain is Cytoplasmic. The chain crosses the membrane as a helical span at residues 257 to 277 (LGQFISSGVNISITLVNILFF). Over 278–281 (ADNN) the chain is Extracellular. The helical transmembrane segment at 282-302 (FAITYYGVYFLSMVLELFPCC) threads the bilayer. The Cytoplasmic portion of the chain corresponds to 303-355 (YYGTLISVEMNQLTYAIYSSNWMSMNRSYSRILLIFMQLTLAEVQIKAGGMIG). A helical transmembrane segment spans residues 356-376 (IGMNAFFATVRLAYSFFTLAM). Over 377–379 (SLR) the chain is Extracellular.

This sequence belongs to the insect chemoreceptor superfamily. Heteromeric odorant receptor channel (TC 1.A.69) family. Or2a subfamily. As to quaternary structure, interacts with Orco. Complexes exist early in the endomembrane system in olfactory sensory neurons (OSNs), coupling these complexes to the conserved ciliary trafficking pathway. Expressed in 15 cells in the antenna but not the maxillary palp.

The protein resides in the cell membrane. In terms of biological role, odorant receptor which mediates acceptance or avoidance behavior, depending on its substrates. The odorant receptor repertoire encodes a large collection of odor stimuli that vary widely in identity, intensity, and duration. May form a complex with Orco to form odorant-sensing units, providing sensitive and prolonged odorant signaling and calcium permeability. Involved in the behavioral responses to pentyl acetate and pyrazines. The sequence is that of Odorant receptor 33b (Or33b) from Drosophila melanogaster (Fruit fly).